Here is a 186-residue protein sequence, read N- to C-terminus: Peptidyl-tRNA hydrolase (186 aa).

TRNA is bound at residue tyrosine 16. Catalysis depends on histidine 21, which acts as the Proton acceptor. The tRNA site is built by tyrosine 60 and asparagine 62.

This sequence belongs to the PTH family. As to quaternary structure, monomer.

It localises to the cytoplasm. It carries out the reaction an N-acyl-L-alpha-aminoacyl-tRNA + H2O = an N-acyl-L-amino acid + a tRNA + H(+). In terms of biological role, hydrolyzes ribosome-free peptidyl-tRNAs (with 1 or more amino acids incorporated), which drop off the ribosome during protein synthesis, or as a result of ribosome stalling. Functionally, catalyzes the release of premature peptidyl moieties from peptidyl-tRNA molecules trapped in stalled 50S ribosomal subunits, and thus maintains levels of free tRNAs and 50S ribosomes. The polypeptide is Peptidyl-tRNA hydrolase (Tropheryma whipplei (strain Twist) (Whipple's bacillus)).